Here is a 616-residue protein sequence, read N- to C-terminus: Kelch-like protein 36 (616 aa).

The region spanning 46–113 (CDVVLVADEQ…LYGGELVLDG (68 aa)) is the BTB domain. Residues 148–250 (YLYLQELASI…PKNDLLHRVK (103 aa)) enclose the BACK domain. 6 Kelch repeats span residues 296 to 345 (CLLF…VLGG), 346 to 397 (FIFI…SIED), 398 to 444 (MLVA…IYKD), 446 to 493 (VYIS…SLGD), 494 to 546 (SIYS…VWEG), and 547 to 595 (RIYI…VCAL).

Interacts with CUL3.

It participates in protein modification; protein ubiquitination. Its function is as follows. Probable substrate-specific adapter of an E3 ubiquitin-protein ligase complex which mediates the ubiquitination and subsequent proteasomal degradation of target proteins. The protein is Kelch-like protein 36 (KLHL36) of Bos taurus (Bovine).